A 760-amino-acid polypeptide reads, in one-letter code: General transcription and DNA repair factor IIH helicase subunit XPD (760 aa).

One can recognise a Helicase ATP-binding domain in the interval 7–283; that stretch reads GLLVYFPYDY…KETDEQRLRD (277 aa). Residue 42-49 participates in ATP binding; that stretch reads MPSGTGKT. The [4Fe-4S] cluster site is built by Cys-116, Cys-134, Cys-155, and Cys-190. Positions 234–237 match the DEAH box motif; that stretch reads DEAH. The mediates interaction with MMS19 stretch occupies residues 438-637; that stretch reads MDASLAIKPV…TQSRILKARL (200 aa). Residues 682–695 carry the Nuclear localization signal motif; it reads KRFARGDKRGKLPR.

This sequence belongs to the helicase family. RAD3/XPD subfamily. In terms of assembly, component of the 7-subunit TFIIH core complex composed of XPB/ERCC3, XPD/ERCC2, GTF2H1, GTF2H2, GTF2H3, GTF2H4 and GTF2H5, which is active in NER. The core complex associates with the 3-subunit CDK-activating kinase (CAK) module composed of CCNH/cyclin H, CDK7 and MNAT1 to form the 10-subunit holoenzyme (holo-TFIIH) active in transcription. Interacts with GTF2H2 (p44) which stimulates the 5'-3' helicase activity of this subunit. Component of the MMXD complex, which includes CIAO1, ERCC2, CIAO2B, MMS19 and SLC25A5. Interacts with CIAO1 and CIAO2B; the interaction WITH CIAO2B is direct. Interacts with ATF7IP. Interacts directly with MMS19. Part of TBP-based Pol II pre-initiation complex (PIC), in which Pol II core assembles with general transcription factors and other specific initiation factors including GTF2E1, GTF2E2, GTF2F1, GTF2F2, TCEA1, ERCC2, ERCC3, GTF2H2, GTF2H3, GTF2H4, GTF2H5, GTF2A1, GTF2A2, GTF2B and TBP; this large multi-subunit PIC complex mediates DNA unwinding and targets Pol II core to the transcription start site where the first phosphodiester bond forms. (Microbial infection) Interacts with Epstein-Barr virus EBNA2. The cofactor is Mg(2+). [4Fe-4S] cluster serves as cofactor. Post-translationally, ISGylated.

The protein localises to the nucleus. Its subcellular location is the cytoplasm. It localises to the cytoskeleton. It is found in the spindle. The enzyme catalyses Couples ATP hydrolysis with the unwinding of duplex DNA at the replication fork by translocating in the 5'-3' direction. This creates two antiparallel DNA single strands (ssDNA). The leading ssDNA polymer is the template for DNA polymerase III holoenzyme which synthesizes a continuous strand.. It catalyses the reaction ATP + H2O = ADP + phosphate + H(+). Interaction with GTF2H2 (p44) results in stimulation of the 5'-3' helicase activity of this subunit. DNA unwinding by this subunit in TFIIH is stimulated 4-fold by XPA and 20-fold by ERCC5/XPG. Functionally, ATP-dependent 5'-3' DNA helicase. Component of the general transcription and DNA repair factor IIH (TFIIH) core complex, not absolutely essential for minimal transcription in vitro. Required for transcription-coupled nucleotide excision repair (NER) of damaged DNA; recognizes damaged bases. Sequestered in chromatin on UV-damaged DNA. When complexed to CDK-activating kinase (CAK), involved in transcription by RNA polymerase II. In NER, TFIIH acts by opening DNA around the lesion to allow the excision of the damaged oligonucleotide and its replacement by a new DNA fragment. The ATP-dependent helicase activity of XPD/ERCC2 is required for DNA opening. Involved in DNA lesion verification. In transcription, TFIIH has an essential role in transcription initiation. When the pre-initiation complex (PIC) has been established, TFIIH is required for promoter opening and promoter escape. Phosphorylation of the C-terminal tail (CTD) of the largest subunit of RNA polymerase II by the kinase module CAK controls the initiation of transcription. XPD/ERCC2 acts by forming a bridge between CAK and the core-TFIIH complex. The structure of the TFIIH transcription complex differs from the NER-TFIIH complex; large movements by XPD/ERCC2 and XPB/ERCC3 are stabilized by XPA which allow this subunit to contact ssDNA. Involved in the regulation of vitamin-D receptor activity. As part of the mitotic spindle-associated MMXD complex it plays a role in chromosome segregation. Might have a role in aging process and could play a causative role in the generation of skin cancers. This chain is General transcription and DNA repair factor IIH helicase subunit XPD (ERCC2), found in Homo sapiens (Human).